The following is a 1330-amino-acid chain: Protein PUTATIVE RECOMBINATION INITIATION DEFECT 1 (1330 aa).

Residues 1310–1330 (REGRVSPIQEETRQMQTERIV) are disordered.

As to quaternary structure, interacts with SPO11-1. According to PubMed:28855712, may interact with SPO11-2; this is in contradiction with PubMed:9461215 which claims that it seems to not interact with SPO11-2. Binds to DFO, PRD3 and MTOPVIB. Facilitates an interaction between PRD3 and DFO. Expressed in flower buds.

The protein resides in the nucleus. Its function is as follows. Involved in DNA cleavage that forms the double-strand breaks (DSB) that initiate meiotic recombination. The chain is Protein PUTATIVE RECOMBINATION INITIATION DEFECT 1 from Arabidopsis thaliana (Mouse-ear cress).